The chain runs to 634 residues: MMRTWMVYVVGLVGELYGSQVEETREMREMKEALERLFSRRLSDSEIEMVESLEDGGNFETRVLVPVIFHKDKVVVSPAARYRDIEKEERVYVEEVIRRLRSLVWHSMVYIYVPKNNDWIMDLICEVLEMSSPQRLDDVALYKDTGGKCGMKFVDLVNKMFKQNADMLIKFGDLLSNGAETRILELPDSLREDERRREVEMLQRVKEYGKMLCTEDKQKEIVEAQKIMCDACEQIWRREEDRKEFTMEIYSRYLNMKVMRGGVERDVEDPLIDHMDHYMLISTHKKYKCMDVVAELVRKVFVEDKDIEDSDVMSAVCSVRERKRLEEMREMEERKRKEEERAKNEEELLRMVEREEREKREESKGRGKKKRGNRGAGESKEESKGRGKRKRGNKGAGESKEEDRGEEGGVEAEDPLEEMAVGEAWRKKKGSGEKRISEEHHYKVHSRVLRWKKDAGEIKRELDEGYEKKWKNRSIEEIKEQKKVHDIVEVMKLLRDKEKCDRFFVRTGKYMKGKSERWKMVANGILEEGGEKKVGKVEVGLFKGEGGESVVYHLMFRPTETERTGRVGGSSFGKYDDVDEIKKEKSSDMFGFRYPSGVRCEMTSNRNEFRIEYRNRKNTSEVLRTLTILRIPET.

2 stretches are compositionally biased toward basic and acidic residues: residues 354-365 and 397-407; these read REEREKREESKG and GESKEEDRGEE. The segment at 354–438 is disordered; the sequence is REEREKREES…KGSGEKRISE (85 aa). Residues 408 to 417 are compositionally biased toward acidic residues; that stretch reads GGVEAEDPLE.

Belongs to the UPF0329 family.

The chain is UPF0329 protein ECU07_1850/ECU10_0050 from Encephalitozoon cuniculi (strain GB-M1) (Microsporidian parasite).